The chain runs to 378 residues: uncharacterized protein (378 aa).

Cys-16 functions as the For GATase activity in the catalytic mechanism. The 363-residue stretch at 16–378 folds into the Glutamine amidotransferase type-2 domain; it reads CGLFGVIDRS…ELAKQLSEVE (363 aa).

This is an uncharacterized protein from Archaeoglobus fulgidus (strain ATCC 49558 / DSM 4304 / JCM 9628 / NBRC 100126 / VC-16).